Reading from the N-terminus, the 344-residue chain is MSKSGVLLLNLGGPETQADVQPFLYNLFADPELIRLPFPFLQRAFAWAISTLRAEKSRRNYAAIGGGSPLRRITAEQARELQAHLVAEGYDVPVYVAMRYWHPLIESVVQQIKSDGITRLVVLPLYPQYSISTTGSSFKLLDRLWAEDPELACIERRQICSWYDQPQYVQAMARAIREQLDGFAEPEGVHVLFSAHGIPESYVTEAGDPYQREMEACVRLIWKQVGRPNDHTLSYQSRVGSVRWLQPYTERVILELGSRGVKQLLVVPISFVSEHIETLQEIDIEYRELAHRAGIADFRRVPALNADPLFIAGLAALVRPHLLTPGLAAPAFVPAAVGSSLLER.

Residues His-196 and Glu-277 each coordinate Fe cation.

The protein belongs to the ferrochelatase family.

It is found in the cytoplasm. The catalysed reaction is heme b + 2 H(+) = protoporphyrin IX + Fe(2+). The protein operates within porphyrin-containing compound metabolism; protoheme biosynthesis; protoheme from protoporphyrin-IX: step 1/1. Functionally, catalyzes the ferrous insertion into protoporphyrin IX. The protein is Ferrochelatase of Synechococcus sp. (strain JA-2-3B'a(2-13)) (Cyanobacteria bacterium Yellowstone B-Prime).